A 544-amino-acid chain; its full sequence is Chaperonin GroEL (544 aa).

ATP-binding positions include 30 to 33 (TLGP), Lys-51, 87 to 91 (DGTTT), Gly-415, and Asp-495.

The protein belongs to the chaperonin (HSP60) family. In terms of assembly, forms a cylinder of 14 subunits composed of two heptameric rings stacked back-to-back. Interacts with the co-chaperonin GroES.

It is found in the cytoplasm. It carries out the reaction ATP + H2O + a folded polypeptide = ADP + phosphate + an unfolded polypeptide.. In terms of biological role, together with its co-chaperonin GroES, plays an essential role in assisting protein folding. The GroEL-GroES system forms a nano-cage that allows encapsulation of the non-native substrate proteins and provides a physical environment optimized to promote and accelerate protein folding. The protein is Chaperonin GroEL of Neisseria meningitidis serogroup C (strain 053442).